The chain runs to 799 residues: Integrin beta-1 (799 aa).

Residues 1 to 20 (MNLQLVFWIGLISLICSVFG) form the signal peptide. Residues 21-729 (QTDKNRCLKA…ETPDCPTGPD (709 aa)) lie on the Extracellular side of the membrane. The PSI domain occupies 26-76 (RCLKANAKSCGECIQAGPNCGWCTNTTFLQEGMPTSARCDDLEALKKKGCH). 28 disulfide bridges follow: C27–C45, C35–C465, C38–C64, C48–C75, C207–C213, C261–C301, C401–C415, C435–C463, C467–C487, C478–C490, C492–C501, C503–C534, C517–C532, C526–C537, C539–C554, C556–C577, C561–C575, C569–C580, C582–C591, C593–C616, C600–C614, C608–C619, C621–C631, C634–C637, C641–C692, C647–C666, C650–C662, and C700–C724. 3 N-linked (GlcNAc...) asparagine glycosylation sites follow: N50, N94, and N97. One can recognise a VWFA domain in the interval 140–378 (DYPIDLYYLM…QLIIDAYNSL (239 aa)). 2 residues coordinate Mg(2+): S152 and S154. Residues S154, D157, D158, and E189 each contribute to the Ca(2+) site. The interval 207–213 (CTSEQNC) is CX3CL1-binding. N212 is a glycosylation site (N-linked (GlcNAc...) asparagine). N244, D246, P248, and E249 together coordinate Ca(2+). E249 contacts Mg(2+). An N-linked (GlcNAc...) asparagine glycan is attached at N269. The segment at 295–314 (LPNDGQCHLENNVYTMSHYY) is CX3CL1-binding. G362 lines the Ca(2+) pocket. N363, N406, and N417 each carry an N-linked (GlcNAc...) asparagine glycan. Residues 383–466 (ILENSKLPDG…VVLQFICKCN (84 aa)) are interaction with TMEM182. I-EGF domains are found at residues 467-502 (CQSH…RHCE), 503-555 (CSTD…KFCE), 556-592 (CDNF…SACD), and 593-632 (CSLD…PTCE). N-linked (GlcNAc...) asparagine glycosylation is present at N482. A glycan (N-linked (GlcNAc...) asparagine) is linked at N521. N585 is a glycosylation site (N-linked (GlcNAc...) asparagine). N-linked (GlcNAc...) asparagine glycosylation occurs at N670. The helical transmembrane segment at 730 to 752 (IIPIVAGVVAGIVLIGLALLLIW) threads the bilayer. Residues 753-799 (KLLMIIHDRREFAKFEKEKMNAKWDTGENPIYKSAVTTVVNPKYEGK) are Cytoplasmic-facing. Residues 763-768 (EFAKFE) form a signal for sorting from recycling endosomes; interaction with ACAP1 region. A Phosphothreonine modification is found at T778. Y784 is subject to Phosphotyrosine. At S786 the chain carries Phosphoserine. Residues 786–793 (SAVTTVVN) form an interaction with ITGB1BP1 region. Position 790 is a phosphothreonine (T790). At K795 the chain carries N6-acetyllysine; alternate. Residue K795 forms a Glycyl lysine isopeptide (Lys-Gly) (interchain with G-Cter in SUMO1); alternate linkage.

This sequence belongs to the integrin beta chain family. As to quaternary structure, interacts with seprase FAP (seprase); the interaction occurs at the cell surface of invadopodia membrane in a collagen-dependent manner. Heterodimer of an alpha and a beta subunit. Beta-1 associates with either alpha-1, alpha-2, alpha-3, alpha-4, alpha-5, alpha-6, alpha-7, alpha-8, alpha-9, alpha-10, alpha-11 or alpha-V. ITGA6:ITGB1 is found in a complex with CD9; interaction takes place in oocytes and is involved in sperm-egg fusion. Binds LGALS3BP and NMRK2, when associated with alpha-7, but not with alpha-5. Interacts with FLNA, FLNB, FLNC and RANBP9. Interacts with KRT1 in the presence of RACK1 and SRC. Interacts with JAML; integrin alpha-4/beta-1 may regulate leukocyte to endothelial cells adhesion by controlling JAML homodimerization. Interacts with RAB21. Interacts (via the cytoplasmic region) with RAB25 (via the hypervariable C-terminal region). Interacts with MYO10. Interacts with ITGB1BP1 (via C-terminal region); the interaction is a prerequisite for focal adhesion disassembly. Interacts with TLN1; the interaction is prevented by competitive binding of ITGB1BP1. Interacts with ACAP1; required for ITGB1 recycling. Interacts with ASAP3. Interacts with FERMT2; the interaction is inhibited in presence of ITGB1BP1. Interacts with DAB2. Interacts with FGR and HCK. Interacts with alpha-7A and alpha-7B in adult skeletal muscle. Interacts with alpha-7B in cardiomyocytes of adult heart. Interacts with EMP2; the interaction may be direct or indirect and ITGB1 has a heterodimer form. ITGA5:ITGB1 interacts with CCN3. ITGA4:ITGB1 is found in a ternary complex with CX3CR1 and CX3CL1. ITGA5:ITGB1 interacts with FBN1. ITGA5:ITGB1 acts as a receptor for fibronectin FN1 and mediates R-G-D-dependent cell adhesion to FN1. ITGA5:ITGB1 interacts with IL1B. Interacts with MDK. ITGA4:ITGB1 interacts with MDK; this interaction mediates MDK-induced osteoblast cells migration through PXN phosphorylation. ITGA6:ITGB1 interacts with MDK; this interaction mediates MDK-induced neurite-outgrowth. ITGA5:ITGB1 interacts with ACE2. Interacts with TMEM182 and LAMB1. Interacts with tensin TNS3; TNS3 also interacts with PEAK1, thus acting as an adapter molecule to bridge the association of PEAK1 with ITGB1. Interacts with tensin TNS4; the interaction displaces tensin TNS3 from the ITGB1 cytoplasmic tail and promotes ITGB1 stability. Integrin ITGA9:ITGB1 interacts with SPP1/OPN (via N-terminus). Integrin ITGA9:ITGB1 interacts with TNC/TNFN3 (via the 3rd Fibronectin type-III domain). Integrins ITGA4:ITGB1 and ITGA9:ITGB1 interact with SVEP1 (via Sushi domain 21); thereby inhibit Ca(2+) intracellular signaling and as a result repress vasocontraction. ITGA4:ITGB1 and ITGA5:ITGB1 interacts with SELP. ITGA5:ITGB1 interacts with IGFBP1. ITGA4:ITGB1 interacts with BCAM. Interacts with ADGRG6.

It localises to the cell membrane. Its subcellular location is the cell projection. The protein localises to the invadopodium membrane. It is found in the ruffle membrane. The protein resides in the recycling endosome. It localises to the melanosome. Its subcellular location is the lamellipodium. The protein localises to the ruffle. It is found in the cell junction. The protein resides in the focal adhesion. Integrins alpha-1/beta-1, alpha-2/beta-1, alpha-10/beta-1 and alpha-11/beta-1 are receptors for collagen. Integrins alpha-1/beta-1 and alpha-2/beta-2 recognize the proline-hydroxylated sequence G-F-P-G-E-R in collagen. Integrins alpha-2/beta-1, alpha-3/beta-1, alpha-4/beta-1, alpha-5/beta-1, alpha-8/beta-1, alpha-10/beta-1, alpha-11/beta-1 and alpha-V/beta-1 are receptors for fibronectin. Alpha-4/beta-1 recognizes one or more domains within the alternatively spliced CS-1 and CS-5 regions of fibronectin. Integrin alpha-5/beta-1 is a receptor for fibrinogen. Integrin alpha-1/beta-1, alpha-2/beta-1, alpha-6/beta-1 and alpha-7/beta-1 are receptors for lamimin. Integrin alpha-6/beta-1 (ITGA6:ITGB1) is present in oocytes and is involved in sperm-egg fusion. Integrin alpha-4/beta-1 is a receptor for VCAM1 and recognizes the sequence Q-I-D-S in VCAM1. Integrin alpha-9/beta-1 is a receptor for VCAM1, cytotactin and osteopontin. It recognizes the sequence A-E-I-D-G-I-E-L in cytotactin. Integrin alpha-3/beta-1 is a receptor for epiligrin, thrombospondin and CSPG4. Integrin alpha-3/beta-1 provides a docking site for FAP (seprase) at invadopodia plasma membranes in a collagen-dependent manner and hence may participate in the adhesion, formation of invadopodia and matrix degradation processes, promoting cell invasion. Alpha-3/beta-1 may mediate with LGALS3 the stimulation by CSPG4 of endothelial cells migration. Integrin alpha-V/beta-1 is a receptor for vitronectin. Beta-1 integrins recognize the sequence R-G-D in a wide array of ligands. When associated with alpha-7/beta-1 integrin, regulates cell adhesion and laminin matrix deposition. Involved in promoting endothelial cell motility and angiogenesis. Involved in osteoblast compaction through the fibronectin fibrillogenesis cell-mediated matrix assembly process and the formation of mineralized bone nodules. May be involved in up-regulation of the activity of kinases such as PKC via binding to KRT1. Together with KRT1 and RACK1, serves as a platform for SRC activation or inactivation. Plays a mechanistic adhesive role during telophase, required for the successful completion of cytokinesis. ITGA4:ITGB1 binds to fractalkine (CX3CL1) and may act as its coreceptor in CX3CR1-dependent fractalkine signaling. ITGA4:ITGB1 and ITGA5:ITGB1 bind to PLA2G2A via a site (site 2) which is distinct from the classical ligand-binding site (site 1) and this induces integrin conformational changes and enhanced ligand binding to site 1. ITGA5:ITGB1 acts as a receptor for fibrillin-1 (FBN1) and mediates R-G-D-dependent cell adhesion to FBN1. ITGA5:ITGB1 is a receptor for IL1B and binding is essential for IL1B signaling. ITGA5:ITGB3 is a receptor for soluble CD40LG and is required for CD40/CD40LG signaling. Plays an important role in myoblast differentiation and fusion during skeletal myogenesis. ITGA9:ITGB1 may play a crucial role in SVEP1/polydom-mediated myoblast cell adhesion. Integrins ITGA9:ITGB1 and ITGA4:ITGB1 repress PRKCA-mediated L-type voltage-gated channel Ca(2+) influx and ROCK-mediated calcium sensitivity in vascular smooth muscle cells via their interaction with SVEP1, thereby inhibit vasocontraction. This chain is Integrin beta-1 (Itgb1), found in Rattus norvegicus (Rat).